The sequence spans 225 residues: Lectin (225 aa).

In terms of assembly, homotetramer.

In terms of biological role, chitin-binding lectin. Agglutinates rabbit erythrocytes, but not human erythrocytes. The protein is Lectin of Vachellia farnesiana (Sweet acacia).